The following is a 95-amino-acid chain: YcgL domain-containing protein Patl_2802 (95 aa).

In terms of domain architecture, YcgL spans 4–88 (LLCAVYKSSK…PEENLLKQHL (85 aa)).

The protein is YcgL domain-containing protein Patl_2802 of Pseudoalteromonas atlantica (strain T6c / ATCC BAA-1087).